The primary structure comprises 61 residues: Short neurotoxin 4 (61 aa).

Disulfide bonds link Cys3/Cys23, Cys17/Cys40, Cys42/Cys53, and Cys54/Cys59.

This sequence belongs to the three-finger toxin family. Short-chain subfamily. Type I alpha-neurotoxin sub-subfamily. In terms of tissue distribution, expressed by the venom gland.

It localises to the secreted. In terms of biological role, binds to muscle nicotinic acetylcholine receptor (nAChR) and inhibit acetylcholine from binding to the receptor, thereby impairing neuromuscular transmission. This Naja annulifera (Banded Egyptian cobra) protein is Short neurotoxin 4.